We begin with the raw amino-acid sequence, 143 residues long: FAM161 homolog famh-136 (143 aa).

Belongs to the FAM136 family.

Its subcellular location is the cytoplasm. Functionally, may play a role in locomotion and behavior. This is FAM161 homolog famh-136 from Caenorhabditis elegans.